The following is a 2310-amino-acid chain: Retinal-specific phospholipid-transporting ATPase ABCA4 (2310 aa).

Residues 1–21 (MGFLRQIQLLLWKNWTLRKRQ) are Cytoplasmic-facing. The helical transmembrane segment at 22-42 (KIRFVVELVWPLSLFLVLIWL) threads the bilayer. The Extracellular portion of the chain corresponds to 43-646 (RNANPLYSQH…MPYPCFVDDS (604 aa)). 2 cysteine pairs are disulfide-bonded: Cys-54–Cys-81 and Cys-75–Cys-324. N-linked (GlcNAc...) asparagine glycosylation is present at Asn-98. Ser-336 and Asn-338 together coordinate Mg(2+). A disulfide bridge connects residues Cys-370 and Cys-519. N-linked (GlcNAc...) asparagine glycans are attached at residues Asn-415 and Asn-504. Positions 587 and 653 each coordinate an N-all-trans-retinylidenephosphatidylethanolamine. Disulfide bonds link Cys-641/Cys-1489, Cys-1443/Cys-1454, and Cys-1487/Cys-1501. A helical membrane pass occupies residues 647 to 667 (FMIILNRCFPIFMVLAWIYSV). Over 668–699 (SMTVKGIVLEKELRLKETLKNQGVSNAVIWCT) the chain is Cytoplasmic. A helical transmembrane segment spans residues 700-720 (WFLDSFSIMALSIFLLTLFIM). Residues 721–730 (HGRILHYSDP) are Extracellular-facing. Residues 731-751 (FILFLFLLAFATATIMQSFLL) form a helical membrane-spanning segment. Residues 752–759 (STLFSKAS) are Cytoplasmic-facing. Residues 760–780 (LAAACSGVIYFTLYLPHVLCF) traverse the membrane as a helical segment. Residues 781 to 835 (AWQDRMTADLKTTVSLLSSVAFGFGTEYLVRFEEQGLGLQWSNIGKSPLEGDEFS) are Extracellular-facing. The chain crosses the membrane as a helical span at residues 836–856 (FLLSMKMMLLDAALYGLLAWY). Residues 857–1375 (LDQVFPGDYG…IRSRKDFVAQ (519 aa)) lie on the Cytoplasmic side of the membrane. The interval 891–910 (ERALEKTEPLTEEMEDPEHP) is disordered. A Phosphothreonine modification is found at Thr-901. The 232-residue stretch at 929–1160 (VCVKNLVKVF…FGTGFYLTLV (232 aa)) folds into the ABC transporter 1 domain. Residues Phe-938, Gly-966, and Lys-969 each coordinate ATP. Residue Thr-970 coordinates Mg(2+). 6 residues coordinate ATP: Thr-971, Gln-1010, Lys-1054, Gly-1064, Gly-1065, and His-1118. The residue at position 1185 (Ser-1185) is a Phosphoserine. The disordered stretch occupies residues 1311–1344 (RQYAQAPHTCSPGQVDPPKGQPSPEPEDPGVPFN). The helical transmembrane segment at 1376–1396 (IVLPATFVFLALMLSIIVPPF) threads the bilayer. At 1397–1726 (GEFPALTLHP…VSPTTYWLTN (330 aa)) the chain is on the extracellular side. An N-linked (GlcNAc...) asparagine glycan is attached at Asn-1468. N-linked (GlcNAc...) asparagine glycosylation is found at Asn-1528, Asn-1587, and Asn-1661. The helical transmembrane segment at 1727–1747 (FLWDIMNYAVSAGLVVGIFIG) threads the bilayer. The Cytoplasmic segment spans residues 1748 to 1758 (FQKKAYTSPDN). Residues 1759–1779 (LPALVSLLMLYGWAVIPMMYP) traverse the membrane as a helical segment. The Extracellular segment spans residues 1780–1791 (ASFLFEVPSTAY). The helical transmembrane segment at 1792-1812 (VALSCANLFIGINSSAITFVL) threads the bilayer. The Cytoplasmic portion of the chain corresponds to 1813–1830 (ELFENNRTLLRFNAMLRK). A helical membrane pass occupies residues 1831–1851 (LLIVFPHFCLGRGLIDLALSQ). Topologically, residues 1852-1872 (AVTDVYAQFGEEYSANPFQWD) are extracellular. Residues 1873–1893 (LIGKNLVAMAIEGVVYFLLTL) form a helical membrane-spanning segment. At 1894-2310 (LIQHHFFLTR…AEDKHTRSPQ (417 aa)) the chain is on the cytoplasmic side. Positions 1937–2169 (LKLNELTKVY…FGDGYIVTMK (233 aa)) constitute an ABC transporter 2 domain. Residues Asn-1973, Gly-1974, Lys-1977, Thr-1978, Thr-1979, and Gly-2072 each contribute to the ATP site. Thr-1978 is a Mg(2+) binding site. Residues 2243–2248 (VFVNFA) form an essential for ATP binding and ATPase activity region. Positions 2266-2310 (ASWQAKLEEKSGRLQTQEPLPAGSEQLANGSNPTAAEDKHTRSPQ) are disordered. Positions 2301–2310 (AEDKHTRSPQ) are enriched in basic and acidic residues.

The protein belongs to the ABC transporter superfamily. ABCA family. Post-translationally, N-glycosylated. In terms of processing, proteolytic cleavage by trypsin leads to a 120-kDa N-terminal fragment and a 115-kDa C-terminal fragment that are linked through disulfide bonds. Phosphorylation is independent of light exposure and modulates ATPase activity. Retinal-specific. Seems to be exclusively found in the rims of rod photoreceptor cells.

Its subcellular location is the membrane. It is found in the endoplasmic reticulum. It localises to the cell projection. The protein resides in the cilium. The protein localises to the photoreceptor outer segment. It carries out the reaction an N-all-trans-retinylidenephosphatidylethanolamine(out) + ATP + H2O = an N-all-trans-retinylidenephosphatidylethanolamine(in) + ADP + phosphate + H(+). The enzyme catalyses ATP + H2O + phospholipidSide 1 = ADP + phosphate + phospholipidSide 2.. It catalyses the reaction a 1,2-diacyl-sn-glycero-3-phosphoethanolamine(out) + ATP + H2O = a 1,2-diacyl-sn-glycero-3-phosphoethanolamine(in) + ADP + phosphate + H(+). The catalysed reaction is N-11-cis-retinylidenephosphatidylethanolamine(out) + ATP + H2O = N-11-cis-retinylidenephosphatidylethanolamine(in) + ADP + phosphate + H(+). It carries out the reaction ATP + H2O = ADP + phosphate + H(+). With respect to regulation, ATPase activity is decreased by cholesterol and ceramide. Phospholipids translocase activity is highly reduced by berylium fluoride and aluminum floride. N-ethylmaleimide inhibits phospholipid translocase activity. Its function is as follows. Flippase that catalyzes in an ATP-dependent manner the transport of retinal-phosphatidylethanolamine conjugates like the 11-cis and all-trans isomers of N-retinylidene-phosphatidylethanolamine from the lumen to the cytoplasmic leaflet of photoreceptor outer segment disk membranes, where N-cis-retinylidene-phosphatidylethanolamine (N-cis-R-PE) is then isomerized to its all-trans isomer (N-trans-R-PE) and reduced by RDH8 to produce all-trans-retinol (all-trans-rol) and therefore prevents the accumulation of excess of 11-cis-retinal and its schiff-base conjugate and the formation of toxic bisretinoid. Displays ATPase activity in vitro in absence of retinal substrate. May display GTPase activity that is strongly influenced by the lipid environment and the presence of retinoid compounds. Binds the unprotonated form of N-retinylidene-phosphatidylethanolamine with high affinity in the absence of ATP and ATP binding and hydrolysis induce a protein conformational change that causes the dissociation of N-retinylidene-phosphatidylethanolamine. In Mus musculus (Mouse), this protein is Retinal-specific phospholipid-transporting ATPase ABCA4.